Consider the following 350-residue polypeptide: CMP-N-acetylneuraminate-beta-galactosamide-alpha-2,3-sialyltransferase 2 (350 aa).

The Cytoplasmic portion of the chain corresponds to 1–6 (MKCSLR). Residues 7 to 27 (VWFLSMAFLLVFIMSLLFTYS) traverse the membrane as a helical; Signal-anchor for type II membrane protein segment. Over 28-350 (HHSMATLPYL…ASKIEVYRGN (323 aa)) the chain is Lumenal. Cystine bridges form between cysteine 70/cysteine 75, cysteine 72/cysteine 149, and cysteine 152/cysteine 291. Residues glutamine 116, asparagine 157, and asparagine 180 each contribute to the substrate site. Asparagine 211 carries an N-linked (GlcNAc...) asparagine glycan. Tyrosine 240, tyrosine 276, glycine 280, glycine 300, histidine 309, and histidine 326 together coordinate substrate.

It belongs to the glycosyltransferase 29 family. Homodimer; disulfide-linked. Homodimer formation occurs in the endoplasmic reticulum. Post-translationally, the soluble form derives from the membrane form by proteolytic processing. In terms of processing, N-glycosylated; necessary for proper exit from endoplasmic reticulum and trafficking to the Golgi apparatus. Strongly expressed in brain and liver and to a lesser extent in heart and kidney. Scarcely detectable in lung, pancreas, spleen and submaxillary gland. Expressed in L5 dorsal root ganglion (DRG) neurons (at protein level).

The protein localises to the golgi apparatus. It localises to the golgi stack membrane. Its subcellular location is the secreted. It carries out the reaction a beta-D-galactosyl-(1-&gt;3)-N-acetyl-alpha-D-galactosaminyl derivative + CMP-N-acetyl-beta-neuraminate = an N-acetyl-alpha-neuraminyl-(2-&gt;3)-beta-D-galactosyl-(1-&gt;3)-N-acetyl-alpha-D-galactosaminyl derivative + CMP + H(+). It catalyses the reaction a ganglioside GM1 (d18:1(4E)) + CMP-N-acetyl-beta-neuraminate = a ganglioside GD1a (d18:1(4E)) + CMP + H(+). The enzyme catalyses ganglioside GM1 (d18:1(4E)/18:0) + CMP-N-acetyl-beta-neuraminate = ganglioside GD1a (18:1(4E)/18:0) + CMP + H(+). The catalysed reaction is a ganglioside GA1 + CMP-N-acetyl-beta-neuraminate = a ganglioside GM1b + CMP + H(+). It carries out the reaction a ganglioside GA1 (d18:1(4E)) + CMP-N-acetyl-beta-neuraminate = a ganglioside GM1b (d18:1(4E)) + CMP + H(+). It catalyses the reaction a ganglioside GD1b + CMP-N-acetyl-beta-neuraminate = a ganglioside GT1b + CMP + H(+). The enzyme catalyses a ganglioside GD1b (d18:1(4E)) + CMP-N-acetyl-beta-neuraminate = a ganglioside GT1b (d18:1(4E)) + CMP + H(+). The catalysed reaction is a globoside GalGb4Cer + CMP-N-acetyl-beta-neuraminate = a globoside MSGG + CMP + H(+). The protein operates within protein modification; protein glycosylation. Its pathway is glycolipid biosynthesis. A beta-galactoside alpha2-3 sialyltransferase primarily involved in terminal sialylation of ganglio and globo series glycolipids. Catalyzes the transfer of sialic acid (N-acetyl-neuraminic acid; Neu5Ac) from the nucleotide sugar donor CMP-Neu5Ac onto acceptor Galbeta-(1-&gt;3)-GalNAc-terminated glycoconjugates through an alpha2-3 linkage. Sialylates GM1/GM1a, GA1/asialo-GM1 and GD1b gangliosides to form GD1a, GM1b and GT1b, respectively. Together with ST3GAL3, primarily responsible for biosynthesis of brain GD1a and GT1b that function as ligands for myelin-associated glycoprotein MAG on axons, regulating MAG expression and axonal myelin stability and regeneration. Via GT1b regulates TLR2 signaling in spinal cord microglia in response to nerve injury. Responsible for the sialylation of the pluripotent stem cell- and cancer stem cell-associated antigen SSEA3, forming SSEA4. Sialylates with low efficiency asialofetuin, presumably onto O-glycosidically linked Galbeta-(1-&gt;3)-GalNAc-O-Ser. The polypeptide is CMP-N-acetylneuraminate-beta-galactosamide-alpha-2,3-sialyltransferase 2 (Mus musculus (Mouse)).